The chain runs to 337 residues: Methionine import ATP-binding protein MetN (337 aa).

An ABC transporter domain is found at 4-240; sequence IKNLEITYPG…PWHPITKEFV (237 aa). Residue 37 to 44 participates in ATP binding; it reads GLSGAGKS.

It belongs to the ABC transporter superfamily. Methionine importer (TC 3.A.1.24) family. The complex is composed of two ATP-binding proteins (MetN), two transmembrane proteins (MetI) and a solute-binding protein (MetQ).

It localises to the cell membrane. The enzyme catalyses L-methionine(out) + ATP + H2O = L-methionine(in) + ADP + phosphate + H(+). The catalysed reaction is D-methionine(out) + ATP + H2O = D-methionine(in) + ADP + phosphate + H(+). Its function is as follows. Part of the ABC transporter complex MetNIQ involved in methionine import. Responsible for energy coupling to the transport system. This Carboxydothermus hydrogenoformans (strain ATCC BAA-161 / DSM 6008 / Z-2901) protein is Methionine import ATP-binding protein MetN.